Here is an 816-residue protein sequence, read N- to C-terminus: Phosphatidylinositol 4-kinase beta (816 aa).

Disordered regions lie at residues 1–30, 101–120, and 248–318; these read MGDT…GSLL, EDEM…RRRR, and AHRK…SFSS. Glycine 2 bears the N-acetylglycine mark. The interaction with ACBD3 stretch occupies residues 2–68; it reads GDTVVEPAPL…VKLLHGGMAV (67 aa). The region spanning 52–242 is the PIK helical domain; the sequence is CQDVLEKVKL…GTKLRKLILS (191 aa). A Phosphoserine modification is found at serine 258. Threonine 263 carries the phosphothreonine modification. Phosphoserine is present on residues serine 266, serine 275, serine 277, serine 284, and serine 294. Polar residues-rich tracts occupy residues 278–297 and 306–318; these read DATA…SNPK and SSST…SFSS. A Phosphoserine modification is found at serine 428. Threonine 438 bears the Phosphothreonine mark. Serine 511 carries the post-translational modification Phosphoserine. 2 positions are modified to phosphothreonine: threonine 517 and threonine 519. Residues 535–801 enclose the PI3K/PI4K catalytic domain; that stretch reads EPWQEKVRRI…MVDGSMRSIT (267 aa). Residues 541-547 are G-loop; that stretch reads VRRIREG. The segment at 668-676 is catalytic loop; that stretch reads QVKDRHNGN. Positions 687 to 711 are activation loop; the sequence is HIDFGFILSSSPRNLGFETSAFKLT.

This sequence belongs to the PI3/PI4-kinase family. Type III PI4K subfamily. In terms of assembly, interacts with ARF1 and ARF3 in the Golgi complex, but not with ARF4, ARF5 or ARF6. Interacts with NCS1/FREQ in a calcium-independent manner. Interacts with CALN1/CABP8 and CALN2/CABP7; in a calcium-dependent manner; this interaction competes with NCS1/FREQ binding. Interacts with ACBD3. Interacts with ARMH3, YWHAB, YWHAE, YWHAG, YWHAH, YWHAQ, YWHAZ and SFN. Interacts with GGA2 (via VHS domain); the interaction is important for PI4KB location at the Golgi apparatus membrane. Interacts with ATG9A. Mg(2+) serves as cofactor. The cofactor is Mn(2+).

The protein resides in the endomembrane system. It is found in the mitochondrion outer membrane. Its subcellular location is the rough endoplasmic reticulum membrane. It localises to the golgi apparatus. The protein localises to the golgi apparatus membrane. The enzyme catalyses a 1,2-diacyl-sn-glycero-3-phospho-(1D-myo-inositol) + ATP = a 1,2-diacyl-sn-glycero-3-phospho-(1D-myo-inositol 4-phosphate) + ADP + H(+). Inhibited by wortmannin. Increased kinase activity upon interaction with NCS1/FREQ. In terms of biological role, phosphorylates phosphatidylinositol (PI) in the first committed step in the production of the second messenger inositol-1,4,5,-trisphosphate (PIP). May regulate Golgi disintegration/reorganization during mitosis, possibly via its phosphorylation. Involved in Golgi-to-plasma membrane trafficking. The sequence is that of Phosphatidylinositol 4-kinase beta (PI4KB) from Plecturocebus moloch (Dusky titi monkey).